The sequence spans 748 residues: Wings apart-like protein homolog 1 (748 aa).

Disordered stretches follow at residues 23-199 and 614-644; these read TLAQ…VYAT and EGGCGDEEEEEEGGDESSDEDGVRKDGRLDR. The span at 35–64 shows a compositional bias: low complexity; sequence PSVRSSDSPDVPDTPDVPVNQLSSPPLSLP. 2 stretches are compositionally biased toward polar residues: residues 68–79 and 87–96; these read SEGNAETLQNLS and LSQSSTSSLN. The segment covering 172 to 182 has biased composition (low complexity); the sequence is ISSSSNRYSSR. In terms of domain architecture, WAPL spans 205-723; the sequence is KPLASGYGSR…KRLYDFTKAT (519 aa). Residues 616 to 633 are compositionally biased toward acidic residues; that stretch reads GCGDEEEEEEGGDESSDE. The span at 634-644 shows a compositional bias: basic and acidic residues; that stretch reads DGVRKDGRLDR.

It belongs to the WAPL family.

It localises to the nucleus. Regulator of meiotic chromosome structure and function, playing a role in sister chromatid cohesion, possibly via antagonizing the coh-3/-4 association with axial elements in nuclei during late prophase, cohesin association with chromatin, DNA double strand break repair and polar body positioning following meiotic divisions during oogenesis. Regulates the morphogenesis and temporal assembly of axial elements to control the organization of meiotic chromosomes in pachytene nuclei and is also involved in meiotic chromosomal remodeling in late pachytene nuclei. Required for the removal of the cohesin component scc-1 from mitotic chromosomes. The protein is Wings apart-like protein homolog 1 of Caenorhabditis elegans.